The following is a 126-amino-acid chain: MPEPAKSAPAPKKGSKKAVTKAQKKDGKKRKRSRKESYSVYVYKVLKQVHPDTGISSKAMGIMNSFVNDIFERIAGEASRLAHYNKRSTITSREIQTAVRLLLPGELAKHAVSEGTKAVTKYTSAK.

Residues 1-12 (MPEPAKSAPAPK) show a composition bias toward low complexity. Residues 1 to 36 (MPEPAKSAPAPKKGSKKAVTKAQKKDGKKRKRSRKE) form a disordered region. N-acetylproline is present on proline 2. An ADP-ribosyl glutamic acid modification is found at glutamate 3. Lysine 6 carries the N6-(2-hydroxyisobutyryl)lysine; alternate modification. Lysine 6 carries the N6-(beta-hydroxybutyryl)lysine; alternate modification. Lysine 6 is subject to N6-acetyllysine; alternate. Lysine 6 bears the N6-butyryllysine; alternate mark. The residue at position 6 (lysine 6) is an N6-crotonyllysine; alternate. N6-lactoyllysine; alternate is present on lysine 6. Residue lysine 6 forms a Glycyl lysine isopeptide (Lys-Gly) (interchain with G-Cter in SUMO2); alternate linkage. Position 7 is an ADP-ribosylserine (serine 7). N6-(beta-hydroxybutyryl)lysine; alternate is present on lysine 12. Lysine 12 and lysine 13 each carry N6-acetyllysine; alternate. 2 positions are modified to N6-crotonyllysine; alternate: lysine 12 and lysine 13. At lysine 12 the chain carries N6-lactoyllysine; alternate. At lysine 13 the chain carries N6-(2-hydroxyisobutyryl)lysine; alternate. Serine 15 is modified (phosphoserine; by STK4/MST1). Lysine 16, lysine 17, lysine 21, and lysine 24 each carry N6-acetyllysine; alternate. N6-crotonyllysine; alternate is present on residues lysine 16, lysine 17, lysine 21, and lysine 24. Residues lysine 16, lysine 17, lysine 21, and lysine 24 each carry the N6-lactoyllysine; alternate modification. N6-(beta-hydroxybutyryl)lysine; alternate occurs at positions 17 and 21. Lysine 17 carries the post-translational modification N6-glutaryllysine; alternate. N6-(2-hydroxyisobutyryl)lysine; alternate is present on residues lysine 21 and lysine 24. At lysine 21 the chain carries N6-butyryllysine; alternate. Lysine 21 is covalently cross-linked (Glycyl lysine isopeptide (Lys-Gly) (interchain with G-Cter in SUMO2); alternate). Lysine 25 is modified (N6-(2-hydroxyisobutyryl)lysine). Lysine 35 is modified (N6-(2-hydroxyisobutyryl)lysine; alternate). Residue lysine 35 is modified to N6-(beta-hydroxybutyryl)lysine; alternate. An N6-crotonyllysine; alternate modification is found at lysine 35. Lysine 35 carries the post-translational modification N6-glutaryllysine; alternate. Lysine 35 is subject to N6-succinyllysine; alternate. Lysine 35 participates in a covalent cross-link: Glycyl lysine isopeptide (Lys-Gly) (interchain with G-Cter in ubiquitin); alternate. Glutamate 36 is modified (polyADP-ribosyl glutamic acid). At serine 37 the chain carries Phosphoserine; by AMPK. 3 positions are modified to N6-(2-hydroxyisobutyryl)lysine; alternate: lysine 44, lysine 47, and lysine 58. Lysine 44 is subject to N6-lactoyllysine; alternate. N6-glutaryllysine; alternate is present on residues lysine 44 and lysine 47. The residue at position 47 (lysine 47) is an N6-methyllysine; alternate. Residue lysine 58 is modified to N6,N6-dimethyllysine; alternate. Arginine 80 is modified (dimethylated arginine). The residue at position 86 (lysine 86) is an N6-(2-hydroxyisobutyryl)lysine; alternate. Lysine 86 bears the N6-(beta-hydroxybutyryl)lysine; alternate mark. An N6-acetyllysine; alternate modification is found at lysine 86. An N6-lactoyllysine; alternate modification is found at lysine 86. The residue at position 86 (lysine 86) is an N6,N6,N6-trimethyllysine; alternate. Residues arginine 87 and arginine 93 each carry the omega-N-methylarginine modification. Lysine 109 bears the N6-(2-hydroxyisobutyryl)lysine; alternate mark. Lysine 109 is subject to N6-lactoyllysine; alternate. An N6-glutaryllysine; alternate modification is found at lysine 109. N6-methyllysine; alternate is present on lysine 109. O-linked (GlcNAc) serine glycosylation occurs at serine 113. Phosphothreonine is present on threonine 116. N6-(2-hydroxyisobutyryl)lysine; alternate is present on residues lysine 117 and lysine 121. Lysine 117 and lysine 121 each carry N6-(beta-hydroxybutyryl)lysine; alternate. Lysine 117 and lysine 121 each carry N6-lactoyllysine; alternate. An N6-glutaryllysine; alternate mark is found at lysine 117 and lysine 121. N6-succinyllysine; alternate is present on residues lysine 117 and lysine 121. N6-malonyllysine; alternate is present on lysine 117. Lysine 117 is subject to N6-methylated lysine; alternate. Residue lysine 121 forms a Glycyl lysine isopeptide (Lys-Gly) (interchain with G-Cter in ubiquitin); alternate linkage.

Belongs to the histone H2B family. The nucleosome is a histone octamer containing two molecules each of H2A, H2B, H3 and H4 assembled in one H3-H4 heterotetramer and two H2A-H2B heterodimers. The octamer wraps approximately 147 bp of DNA. Monoubiquitination at Lys-35 (H2BK34Ub) by the MSL1/MSL2 dimer is required for histone H3 'Lys-4' (H3K4me) and 'Lys-79' (H3K79me) methylation and transcription activation at specific gene loci, such as HOXA9 and MEIS1 loci. Similarly, monoubiquitination at Lys-121 (H2BK120Ub) by the RNF20/40 complex gives a specific tag for epigenetic transcriptional activation and is also prerequisite for histone H3 'Lys-4' and 'Lys-79' methylation. It also functions cooperatively with the FACT dimer to stimulate elongation by RNA polymerase II. H2BK120Ub also acts as a regulator of mRNA splicing: deubiquitination by USP49 is required for efficient cotranscriptional splicing of a large set of exons. In terms of processing, phosphorylation at Ser-37 (H2BS36ph) by AMPK in response to stress promotes transcription. Phosphorylated on Ser-15 (H2BS14ph) by STK4/MST1 during apoptosis; which facilitates apoptotic chromatin condensation. Also phosphorylated on Ser-15 in response to DNA double strand breaks (DSBs), and in correlation with somatic hypermutation and immunoglobulin class-switch recombination. Post-translationally, glcNAcylation at Ser-113 promotes monoubiquitination of Lys-121. It fluctuates in response to extracellular glucose, and associates with transcribed genes. ADP-ribosylated by PARP1 or PARP2 on Ser-7 (H2BS6ADPr) in response to DNA damage. H2BS6ADPr promotes recruitment of CHD1L. Mono-ADP-ribosylated on Glu-3 (H2BE2ADPr) by PARP3 in response to single-strand breaks. Poly ADP-ribosylation on Glu-36 (H2BE35ADPr) by PARP1 regulates adipogenesis: it inhibits phosphorylation at Ser-37 (H2BS36ph), thereby blocking expression of pro-adipogenetic genes. In terms of processing, crotonylation (Kcr) is specifically present in male germ cells and marks testis-specific genes in post-meiotic cells, including X-linked genes that escape sex chromosome inactivation in haploid cells. Crotonylation marks active promoters and enhancers and confers resistance to transcriptional repressors. It is also associated with post-meiotically activated genes on autosomes. Post-translationally, lactylated in macrophages by EP300/P300 by using lactoyl-CoA directly derived from endogenous or exogenous lactate, leading to stimulates gene transcription.

The protein resides in the nucleus. Its subcellular location is the chromosome. Core component of nucleosome. Nucleosomes wrap and compact DNA into chromatin, limiting DNA accessibility to the cellular machineries which require DNA as a template. Histones thereby play a central role in transcription regulation, DNA repair, DNA replication and chromosomal stability. DNA accessibility is regulated via a complex set of post-translational modifications of histones, also called histone code, and nucleosome remodeling. Its function is as follows. Has broad antibacterial activity. May contribute to the formation of the functional antimicrobial barrier of the colonic epithelium, and to the bactericidal activity of amniotic fluid. The sequence is that of Histone H2B type 1-K from Homo sapiens (Human).